A 105-amino-acid chain; its full sequence is Circadian clock oscillator protein KaiB1 (105 aa).

Belongs to the KaiB family. Homotetramer in solution and crystals formed by 2 dimers. Only elutes as a homotetramer in size exclusion chromatography, interacts with KaiC1 and KaiC3. The KaiABC complex composition changes during the circadian cycle to control KaiC phosphorylation. Complexes KaiC(6), KaiA(2-4):KaiC(6), KaiB(6):KaiC(6) and KaiC(6):KaiB(6):KaiA(12) are among the most important forms, many form cooperatively. Undergoes a major conformational rearrangment; in the free state forms homotetramers as a dimer of dimers. When bound to the CI domain of KaiC switches to a monomeric thioredoxin-fold (KaiB(fs)). KaiB(fs) binds CikA, leading it to dephosphorylate phospho-RpaA.

Key component of the KaiABC oscillator complex, which constitutes the main circadian regulator in cyanobacteria. Complex composition changes during the circadian cycle to control KaiC phosphorylation. KaiA stimulates KaiC autophosphorylation, while KaiB sequesters KaiA, leading to KaiC autodephosphorylation. Phospho-Ser-431 KaiC accumulation triggers binding of KaiB to form the KaiB(6):KaiC(6) complex, leading to changes in output regulators CikA and SasA. KaiB switches to a thioredoxin-like fold (KaiB(fs)) when bound to KaiC. KaiB(6):KaiC(6) formation exposes a site for KaiA binding that sequesters KaiA from KaiC, making the KaiC(6):KaiB(6):KaiA(12) complex that results in KaiC autodephosphorylation. Functionally, component of the oscillator and circadian clock in this organism, enhances fitness in a rhythmic environment. The homotetramer reduces the ATPase activity of KaiC3 by 35%. In terms of biological role, a metamorphic protein which reversibly switches between an inactive tetrameric fold and a rare, thioredoxin-like monomeric fold (KaiB(fs)). KaiB(fs) binds phospho-KaiC, KaiA and CikA. KaiA and CikA compete for binding to KaiB(fs), and KaiB(fs) and SasA compete for binding to KaiC, thus the clock oscillator and output signal pathway are tightly coupled. This Synechocystis sp. (strain ATCC 27184 / PCC 6803 / Kazusa) protein is Circadian clock oscillator protein KaiB1.